We begin with the raw amino-acid sequence, 33 residues long: MDNLFRTLFSTFTHLRTSSTILLVGEQHWRNAL.

This chain is Protein YdgV, found in Escherichia coli (strain K12).